The chain runs to 261 residues: Cytochrome c oxidase subunit 3 (261 aa).

Residues 1-15 (MTHQTHAYHMVNPSP) lie on the Mitochondrial matrix side of the membrane. The chain crosses the membrane as a helical span at residues 16 to 34 (WPLTGALSALLMTSGLAMW). The Mitochondrial intermembrane portion of the chain corresponds to 35–40 (FHFNST). Residues 41–66 (LLLALGLLTNILTMYQWWRDIIREST) form a helical membrane-spanning segment. The Mitochondrial matrix portion of the chain corresponds to 67–72 (FQGHHT). Residues 73 to 105 (SIVQKGLRYGMILFIISEVFFFSGFFWAFYHSS) traverse the membrane as a helical segment. The Mitochondrial intermembrane portion of the chain corresponds to 106–128 (LAPTPELGGCWPPTGIHPLNPLE). A helical transmembrane segment spans residues 129 to 152 (VPLLNTSVLLASGVSITWAHHSLM). Residues 153-155 (EGN) are Mitochondrial matrix-facing. The chain crosses the membrane as a helical span at residues 156-183 (RKNMLQGLFITISLGVYFTLLQASEYYE). Residues 184–190 (ASFTISD) are Mitochondrial intermembrane-facing. A helical membrane pass occupies residues 191 to 223 (GVYGSTFFVATGFHGLHVIIGSTFLIVCFLRQL). Residues 224 to 232 (KFHFTSSHH) lie on the Mitochondrial matrix side of the membrane. A helical transmembrane segment spans residues 233 to 256 (FGFEAAAWYWHFVDVVWLFLYVSI). Topologically, residues 257-261 (YWWGS) are mitochondrial intermembrane.

This sequence belongs to the cytochrome c oxidase subunit 3 family. As to quaternary structure, component of the cytochrome c oxidase (complex IV, CIV), a multisubunit enzyme composed of 14 subunits. The complex is composed of a catalytic core of 3 subunits MT-CO1, MT-CO2 and MT-CO3, encoded in the mitochondrial DNA, and 11 supernumerary subunits COX4I, COX5A, COX5B, COX6A, COX6B, COX6C, COX7A, COX7B, COX7C, COX8 and NDUFA4, which are encoded in the nuclear genome. The complex exists as a monomer or a dimer and forms supercomplexes (SCs) in the inner mitochondrial membrane with NADH-ubiquinone oxidoreductase (complex I, CI) and ubiquinol-cytochrome c oxidoreductase (cytochrome b-c1 complex, complex III, CIII), resulting in different assemblies (supercomplex SCI(1)III(2)IV(1) and megacomplex MCI(2)III(2)IV(2)).

It is found in the mitochondrion inner membrane. The enzyme catalyses 4 Fe(II)-[cytochrome c] + O2 + 8 H(+)(in) = 4 Fe(III)-[cytochrome c] + 2 H2O + 4 H(+)(out). Functionally, component of the cytochrome c oxidase, the last enzyme in the mitochondrial electron transport chain which drives oxidative phosphorylation. The respiratory chain contains 3 multisubunit complexes succinate dehydrogenase (complex II, CII), ubiquinol-cytochrome c oxidoreductase (cytochrome b-c1 complex, complex III, CIII) and cytochrome c oxidase (complex IV, CIV), that cooperate to transfer electrons derived from NADH and succinate to molecular oxygen, creating an electrochemical gradient over the inner membrane that drives transmembrane transport and the ATP synthase. Cytochrome c oxidase is the component of the respiratory chain that catalyzes the reduction of oxygen to water. Electrons originating from reduced cytochrome c in the intermembrane space (IMS) are transferred via the dinuclear copper A center (CU(A)) of subunit 2 and heme A of subunit 1 to the active site in subunit 1, a binuclear center (BNC) formed by heme A3 and copper B (CU(B)). The BNC reduces molecular oxygen to 2 water molecules using 4 electrons from cytochrome c in the IMS and 4 protons from the mitochondrial matrix. The protein is Cytochrome c oxidase subunit 3 (MT-CO3) of Equus asinus (Donkey).